The chain runs to 309 residues: tRNA pseudouridine synthase B (309 aa).

Residue Asp39 is the Nucleophile of the active site. The PUA domain maps to 229 to 306 (LPRVVVHQES…ERVLTLRKVF (78 aa)).

It belongs to the pseudouridine synthase TruB family. Type 1 subfamily.

It carries out the reaction uridine(55) in tRNA = pseudouridine(55) in tRNA. Responsible for synthesis of pseudouridine from uracil-55 in the psi GC loop of transfer RNAs. This Thermotoga petrophila (strain ATCC BAA-488 / DSM 13995 / JCM 10881 / RKU-1) protein is tRNA pseudouridine synthase B.